The chain runs to 359 residues: Structure-specific endonuclease subunit SLX1 homolog (359 aa).

The region spanning 9–91 (GLFACYCLVA…TYPTRSRYVN (83 aa)) is the GIY-YIG domain. The SLX1-type zinc finger occupies 192–238 (CPICQDGVSPSNVQCMQCSARFCITCAGKLFTRRNTLIPCFGKCPIC). The interval 256 to 359 (VAGRKSVPHK…LPSDVISITD (104 aa)) is disordered. Polar residues predominate over residues 269-281 (VDGQSSLSQNSSY). The segment covering 295–306 (EPEKDDISRDES) has biased composition (basic and acidic residues). The segment covering 316 to 326 (SSVALSDSSRS) has biased composition (low complexity).

This sequence belongs to the SLX1 family. As to quaternary structure, forms a heterodimer with a member of the SLX4 family. The cofactor is a divalent metal cation.

The protein resides in the nucleus. Catalytic subunit of a heterodimeric structure-specific endonuclease that resolves DNA secondary structures generated during DNA repair and recombination. Has endonuclease activity towards branched DNA substrates, introducing single-strand cuts in duplex DNA close to junctions with ss-DNA. The chain is Structure-specific endonuclease subunit SLX1 homolog from Giardia intestinalis (strain ATCC 50803 / WB clone C6) (Giardia lamblia).